A 109-amino-acid chain; its full sequence is Spermidine export protein MdtI (109 aa).

Helical transmembrane passes span W6–L26, W36–V56, A64–F84, and L88–L108.

It belongs to the drug/metabolite transporter (DMT) superfamily. Small multidrug resistance (SMR) (TC 2.A.7.1) family. MdtI subfamily. In terms of assembly, forms a complex with MdtJ.

It localises to the cell inner membrane. In terms of biological role, catalyzes the excretion of spermidine. The chain is Spermidine export protein MdtI from Enterobacter sp. (strain 638).